A 193-amino-acid chain; its full sequence is Phosphoheptose isomerase (193 aa).

The 157-residue stretch at 37–193 folds into the SIS domain; it reads LADSFKAGGK…QLIEKEMVKA (157 aa). 52–54 contributes to the substrate binding site; sequence NGG. Positions 61 and 65 each coordinate Zn(2+). Residues Glu65, 93–94, 119–121, Ser124, and Gln172 contribute to the substrate site; these read ND and STS. 2 residues coordinate Zn(2+): Gln172 and His180.

This sequence belongs to the SIS family. GmhA subfamily. As to quaternary structure, homotetramer. Zn(2+) is required as a cofactor.

Its subcellular location is the cytoplasm. The enzyme catalyses 2 D-sedoheptulose 7-phosphate = D-glycero-alpha-D-manno-heptose 7-phosphate + D-glycero-beta-D-manno-heptose 7-phosphate. The protein operates within carbohydrate biosynthesis; D-glycero-D-manno-heptose 7-phosphate biosynthesis; D-glycero-alpha-D-manno-heptose 7-phosphate and D-glycero-beta-D-manno-heptose 7-phosphate from sedoheptulose 7-phosphate: step 1/1. Catalyzes the isomerization of sedoheptulose 7-phosphate in D-glycero-D-manno-heptose 7-phosphate. The chain is Phosphoheptose isomerase from Serratia proteamaculans (strain 568).